The primary structure comprises 304 residues: Serine protease 30 (304 aa).

Residues 1–21 (MESWARCIFLLLLQILTGGRG) form the signal peptide. Residues 22–30 (DILHSGAGK) constitute a propeptide, activation peptide. In terms of domain architecture, Peptidase S1 spans 31 to 271 (IVGGQDAPEG…YVDWIQRTLA (241 aa)). The cysteines at positions 57 and 73 are disulfide-linked. The active-site Charge relay system is His72. A glycan (N-linked (GlcNAc...) asparagine) is linked at Asn79. Asp122 serves as the catalytic Charge relay system. 3 disulfide bridges follow: Cys155-Cys229, Cys185-Cys208, and Cys219-Cys247. Ser223 (charge relay system) is an active-site residue. N-linked (GlcNAc...) asparagine glycans are attached at residues Asn232 and Asn273. A lipid anchor (GPI-anchor amidated serine) is attached at Ser275. Residues 276–304 (DAYGCRSRASGAYPALLLVLLAFALPESL) constitute a propeptide, removed in mature form.

This sequence belongs to the peptidase S1 family. Expressed predominantly in kidney, small intestine and stomach and moderately in thymus, lung, spleen, testis and skin. In the kidney, expressed mainly in collecting duct of renal medulla and cortex.

The protein localises to the cell membrane. Its activity is regulated as follows. Inhibited by aprotinin, leupeptin, benzamidine and soybean trypsin inhibitor. Partially inhibited by PMSF and DFP. Its function is as follows. Selectively cleaves synthetic peptide substrates of trypsin. Activates the epithelial sodium channel ENaC. The chain is Serine protease 30 (Prss30) from Rattus norvegicus (Rat).